An 838-amino-acid chain; its full sequence is Tuftelin-interacting protein 11 (838 aa).

Residues 1 to 13 are compositionally biased toward basic and acidic residues; the sequence is MSLSHLYRDGEGH. The required for interaction with DHX15 stretch occupies residues 1–51; that stretch reads MSLSHLYRDGEGHLDDDDDDERENFEITDWDLQNEFNPNRQRHWQTKEEAT. Disordered regions lie at residues 1–74 and 86–137; these read MSLS…RARD and LKKG…SGGT. Phosphoserine is present on serine 2. A compositionally biased stretch (acidic residues) spans 14-29; that stretch reads LDDDDDDERENFEITD. A compositionally biased stretch (basic and acidic residues) spans 45-65; that stretch reads QTKEEATYGVWAERDSDEERP. Residues serine 60, serine 96, and serine 99 each carry the phosphoserine modification. Residues 92–101 are compositionally biased toward acidic residues; the sequence is EEADSEDSDA. Basic and acidic residues predominate over residues 102 to 117; it reads EEKPVKQEDFPKDLGP. The residue at position 145 (serine 145) is a Phosphoserine. In terms of domain architecture, G-patch spans 150–196; it reads TKGIGQKLLQKMGYVPGRGLGKNAQGIINPIEAKQRKGKGAVGAYGS. A disordered region spans residues 193–237; the sequence is AYGSERTTQSLQDFPVADSEEEAEEEFQKELSQWRKDPSGSKKKP. Serine 211 carries the phosphoserine modification. Residues 218–232 show a composition bias toward basic and acidic residues; it reads EFQKELSQWRKDPSG. A Nuclear localization signal motif is present at residues 701 to 706; sequence VKDKFN. Residues 711-735 form a required for nuclear speckle localization region; that stretch reads IMNRAVSSNVGAYMQPGARENIAYL.

It belongs to the TFP11/STIP family. In terms of assembly, identified in the spliceosome C complex. Found in the Intron Large (IL) complex, a post-mRNA release spliceosomal complex containing the excised intron, U2, U5 and U6 snRNPs, and splicing factors. Interacts with TUFT1. Interacts with DHX15; indicative for a recruitment of DHX15 to the IL complex. Interacts with GCFC2. In terms of tissue distribution, widely expressed. In tooth it is expressed in ameloblasts and odontoblasts.

The protein localises to the cytoplasm. The protein resides in the nucleus. Functionally, involved in pre-mRNA splicing, specifically in spliceosome disassembly during late-stage splicing events. Intron turnover seems to proceed through reactions in two lariat-intron associated complexes termed Intron Large (IL) and Intron Small (IS). In cooperation with DHX15 seems to mediate the transition of the U2, U5 and U6 snRNP-containing IL complex to the snRNP-free IS complex leading to efficient debranching and turnover of excised introns. May play a role in the differentiation of ameloblasts and odontoblasts or in the forming of the enamel extracellular matrix. This chain is Tuftelin-interacting protein 11 (Tfip11), found in Mus musculus (Mouse).